The following is an 85-amino-acid chain: Putative membrane protein insertion efficiency factor (85 aa).

Belongs to the UPF0161 family.

It is found in the cell inner membrane. Its function is as follows. Could be involved in insertion of integral membrane proteins into the membrane. The chain is Putative membrane protein insertion efficiency factor from Sodalis glossinidius (strain morsitans).